The sequence spans 228 residues: Lipoprotein LpqN (228 aa).

Positions 1–19 (MKHFTAAVATVALSLALAG) are cleaved as a signal peptide. Residue C20 is the site of N-palmitoyl cysteine attachment. A lipid anchor (S-diacylglycerol cysteine) is attached at C20. The tract at residues 26–53 (TDSAPTTSPTTTSPTTSTTTTSATTSAQ) is disordered. Residues 28–52 (SAPTTSPTTTSPTTSTTTTSATTSA) show a composition bias toward low complexity.

In terms of assembly, interacts with the periplasmic loop domains of the mycolate transporters MmpL3 and MmpL11. Also interacts with secreted cell envelope biosynthetic enzymes such as Ag85A. These interactions are weak and may require a putative mycobacterial adapter protein or molecule. Interacts with human ubiquitin ligase CBL.

It localises to the cell membrane. The protein localises to the secreted. Its function is as follows. Involved in cell envelope biogenesis. May act as a membrane fusion protein, connecting MmpL transporters with periplasmic proteins, and play a role in cell envelope lipid changes during biofilm maturation. Functionally, is also a virulence factor required for intracellular survival. Associates with CBL, a host ubiquitin ligase, and probably blocks the normal functions of CBL and disturbs CBL-mediated antibacterial activity. Interaction counteracts antibacterial defense but causes a reciprocal enhancement of antiviral defense. In Mycobacterium tuberculosis (strain ATCC 25618 / H37Rv), this protein is Lipoprotein LpqN.